The sequence spans 383 residues: 4-hydroxy-3-methylbut-2-en-1-yl diphosphate synthase (flavodoxin) (383 aa).

The [4Fe-4S] cluster site is built by cysteine 277, cysteine 280, cysteine 312, and glutamate 319.

The protein belongs to the IspG family. The cofactor is [4Fe-4S] cluster.

The catalysed reaction is (2E)-4-hydroxy-3-methylbut-2-enyl diphosphate + oxidized [flavodoxin] + H2O + 2 H(+) = 2-C-methyl-D-erythritol 2,4-cyclic diphosphate + reduced [flavodoxin]. The protein operates within isoprenoid biosynthesis; isopentenyl diphosphate biosynthesis via DXP pathway; isopentenyl diphosphate from 1-deoxy-D-xylulose 5-phosphate: step 5/6. Functionally, converts 2C-methyl-D-erythritol 2,4-cyclodiphosphate (ME-2,4cPP) into 1-hydroxy-2-methyl-2-(E)-butenyl 4-diphosphate. This is 4-hydroxy-3-methylbut-2-en-1-yl diphosphate synthase (flavodoxin) from Caulobacter vibrioides (strain ATCC 19089 / CIP 103742 / CB 15) (Caulobacter crescentus).